The following is an 89-amino-acid chain: Small ribosomal subunit protein uS15 (89 aa).

The protein belongs to the universal ribosomal protein uS15 family. Part of the 30S ribosomal subunit. Forms a bridge to the 50S subunit in the 70S ribosome, contacting the 23S rRNA.

In terms of biological role, one of the primary rRNA binding proteins, it binds directly to 16S rRNA where it helps nucleate assembly of the platform of the 30S subunit by binding and bridging several RNA helices of the 16S rRNA. Its function is as follows. Forms an intersubunit bridge (bridge B4) with the 23S rRNA of the 50S subunit in the ribosome. This chain is Small ribosomal subunit protein uS15, found in Lactobacillus helveticus (strain DPC 4571).